The chain runs to 349 residues: Isopentenyl-diphosphate delta-isomerase (349 aa).

Residue 6–7 (RK) participates in substrate binding. Residues 62-64 (AMT), serine 93, and asparagine 122 each bind FMN. Residue glutamine 152 coordinates substrate. Glutamate 153 provides a ligand contact to Mg(2+). FMN is bound by residues lysine 184, threonine 214, 258 to 259 (GG), and 280 to 281 (AG).

Belongs to the IPP isomerase type 2 family. In terms of assembly, homooctamer. Dimer of tetramers. The cofactor is FMN. It depends on NADPH as a cofactor. Mg(2+) is required as a cofactor.

The protein resides in the cytoplasm. The catalysed reaction is isopentenyl diphosphate = dimethylallyl diphosphate. Involved in the biosynthesis of isoprenoids. Catalyzes the 1,3-allylic rearrangement of the homoallylic substrate isopentenyl (IPP) to its allylic isomer, dimethylallyl diphosphate (DMAPP). This Bacillus cereus (strain 03BB102) protein is Isopentenyl-diphosphate delta-isomerase.